Here is a 407-residue protein sequence, read N- to C-terminus: Arginine biosynthesis bifunctional protein ArgJ (407 aa).

Thr169, Lys192, Thr203, Glu283, Asn402, and Ser407 together coordinate substrate. Residue Thr203 is the Nucleophile of the active site.

This sequence belongs to the ArgJ family. As to quaternary structure, heterotetramer of two alpha and two beta chains.

It localises to the cytoplasm. The enzyme catalyses N(2)-acetyl-L-ornithine + L-glutamate = N-acetyl-L-glutamate + L-ornithine. It catalyses the reaction L-glutamate + acetyl-CoA = N-acetyl-L-glutamate + CoA + H(+). It functions in the pathway amino-acid biosynthesis; L-arginine biosynthesis; L-ornithine and N-acetyl-L-glutamate from L-glutamate and N(2)-acetyl-L-ornithine (cyclic): step 1/1. The protein operates within amino-acid biosynthesis; L-arginine biosynthesis; N(2)-acetyl-L-ornithine from L-glutamate: step 1/4. In terms of biological role, catalyzes two activities which are involved in the cyclic version of arginine biosynthesis: the synthesis of N-acetylglutamate from glutamate and acetyl-CoA as the acetyl donor, and of ornithine by transacetylation between N(2)-acetylornithine and glutamate. This chain is Arginine biosynthesis bifunctional protein ArgJ, found in Mycobacterium leprae (strain TN).